The following is a 330-amino-acid chain: Anthranilate phosphoribosyltransferase (330 aa).

5-phospho-alpha-D-ribose 1-diphosphate contacts are provided by residues Gly79, 82–83 (GD), Thr87, 89–92 (NIST), 107–115 (KHGNYGVSS), and Ser119. Residue Gly79 coordinates anthranilate. A Mg(2+)-binding site is contributed by Ser91. Asn110 contributes to the anthranilate binding site. Residue Arg165 participates in anthranilate binding. Residues Asp223 and Glu224 each contribute to the Mg(2+) site.

This sequence belongs to the anthranilate phosphoribosyltransferase family. As to quaternary structure, homodimer. The cofactor is Mg(2+).

It catalyses the reaction N-(5-phospho-beta-D-ribosyl)anthranilate + diphosphate = 5-phospho-alpha-D-ribose 1-diphosphate + anthranilate. It functions in the pathway amino-acid biosynthesis; L-tryptophan biosynthesis; L-tryptophan from chorismate: step 2/5. Functionally, catalyzes the transfer of the phosphoribosyl group of 5-phosphorylribose-1-pyrophosphate (PRPP) to anthranilate to yield N-(5'-phosphoribosyl)-anthranilate (PRA). The chain is Anthranilate phosphoribosyltransferase from Flavobacterium psychrophilum (strain ATCC 49511 / DSM 21280 / CIP 103535 / JIP02/86).